The sequence spans 207 residues: Ribosomal RNA small subunit methyltransferase G (207 aa).

S-adenosyl-L-methionine-binding positions include G76, Q81, 127 to 128, and R141; that span reads VE.

It belongs to the methyltransferase superfamily. RNA methyltransferase RsmG family.

It is found in the cytoplasm. It catalyses the reaction guanosine(527) in 16S rRNA + S-adenosyl-L-methionine = N(7)-methylguanosine(527) in 16S rRNA + S-adenosyl-L-homocysteine. In terms of biological role, specifically methylates the N7 position of guanine in position 527 of 16S rRNA. The chain is Ribosomal RNA small subunit methyltransferase G from Neisseria gonorrhoeae (strain ATCC 700825 / FA 1090).